The sequence spans 73 residues: Sec-independent protein translocase protein TatA (73 aa).

Residues 1–21 (MFGLGAPELILILILALIIFG) traverse the membrane as a helical segment. Residues 52 to 73 (EAAKIDDGNNNSDKEKATRQAS) form a disordered region.

This sequence belongs to the TatA/E family. Forms a complex with TatC.

The protein localises to the cell membrane. In terms of biological role, part of the twin-arginine translocation (Tat) system that transports large folded proteins containing a characteristic twin-arginine motif in their signal peptide across membranes. TatA could form the protein-conducting channel of the Tat system. The protein is Sec-independent protein translocase protein TatA of Moorella thermoacetica (strain ATCC 39073 / JCM 9320).